Here is a 20-residue protein sequence, read N- to C-terminus: Unknown protein NF003 from 2D-PAGE (20 aa).

This Naegleria fowleri (Brain eating amoeba) protein is Unknown protein NF003 from 2D-PAGE.